Reading from the N-terminus, the 186-residue chain is MKINGNEIRPGNVIEHEGGLWVAVKTNAVKPGKGGAYNQVELKNLINGTKLNERFRAAETVERVRLEQKDFSFLYEQGEALIFMDTETYEQLELQKDFVGDRAAFLQDGMMVTVELYEEKPIGIRLPDQVTLAITEADPVVKGQTAASSYKPAVLENGIRIPVPPFITSGERVIVDTNELTYISRA.

Belongs to the elongation factor P family.

It localises to the cytoplasm. It participates in protein biosynthesis; polypeptide chain elongation. Functionally, involved in peptide bond synthesis. Stimulates efficient translation and peptide-bond synthesis on native or reconstituted 70S ribosomes in vitro. Probably functions indirectly by altering the affinity of the ribosome for aminoacyl-tRNA, thus increasing their reactivity as acceptors for peptidyl transferase. The protein is Elongation factor P of Brucella ovis (strain ATCC 25840 / 63/290 / NCTC 10512).